Here is a 974-residue protein sequence, read N- to C-terminus: MKNAFLKTHLFPLCPLDESGSQWLKDIEEQARKENLESLVSYFSAKGKQVDFISAVMTLSPFLREVLIANPSYLSPLLYVDIETRLSEIIDDVALIDKSESINETALMAALRRKKREAHILIALADLSGVFTYEISCTWLTRLGEAALGVALRFLLREAHDHGKISLSSRDNPEKDSGLIILGLGKLGAGELNYSSDIDLIVFIDEMSPHIGDLSESVDVFSKMVRRLIRIIQERTAEGYVFRLDFRLRPDPGSTPLALPVRTALRYYEGRGQNWERAAMIKARPVAGDKRAGFKFLKELFPYVWRKYLDYAAIADIHSIKRQIHACKNYGQITAYGHNIKLGRGGIREIEFFVQTQQLIAGGRFPQLRGRQTVAMLTELHTLGWISEKTSDNLIKSYAFLRNVEHRIQMLADEQTHLLPNDVSQFTSVAYLMGYQESSSFIRDLLKVLQVVEKHYAALFENEQELGLEIGNLVFTGEEDDPETLITLSCLGFERASDICRIMRTLHCGRYKATQSAEARERLTELTPALLKAFGAIKRADEAMLRFDSFLQGLPSGIQLFSLLQSNPSLLDMLVLIMGAAPRLAEIITRKPHVFDGMLDPTILSELPTKTYLENRLEYFLEGVIPYEEILDHLRVFADEQRFLIGIRILNGAITGEKAGFAFTALADLMIAKTLAAVQEEFSRIHGNIKGGRVGILGMGKLGSCELTAGSDVDLILVYEHDEDAEISDGEKPLYISQYYTRFTKRLIAALSTLTSQGVLYAVDLRLRPLGNKGPVAVSFEFFRKYYRKEAWIWEYLALTRARGIAGDPNFLQNLENEVCAIIALPHDKKDVAKAVREMRTLIEKEKPPENRWDLKMMSGGIMDVEFIAQFALITHVVAFQIGASTADILAHLPNSVLNQSCIVDLHRAYSLYTNLNQMIRLCLNDAFDPHDMPPGLSDLLLSSVGEPDLLRVEKLIEETAQSVCSIFKQIMKH.

The segment at 1 to 464 (MKNAFLKTHL…HYAALFENEQ (464 aa)) is adenylyl removase. Positions 468–974 (LEIGNLVFTG…CSIFKQIMKH (507 aa)) are adenylyl transferase.

Belongs to the GlnE family. Mg(2+) is required as a cofactor.

It catalyses the reaction [glutamine synthetase]-O(4)-(5'-adenylyl)-L-tyrosine + phosphate = [glutamine synthetase]-L-tyrosine + ADP. The catalysed reaction is [glutamine synthetase]-L-tyrosine + ATP = [glutamine synthetase]-O(4)-(5'-adenylyl)-L-tyrosine + diphosphate. Functionally, involved in the regulation of glutamine synthetase GlnA, a key enzyme in the process to assimilate ammonia. When cellular nitrogen levels are high, the C-terminal adenylyl transferase (AT) inactivates GlnA by covalent transfer of an adenylyl group from ATP to specific tyrosine residue of GlnA, thus reducing its activity. Conversely, when nitrogen levels are low, the N-terminal adenylyl removase (AR) activates GlnA by removing the adenylyl group by phosphorolysis, increasing its activity. The regulatory region of GlnE binds the signal transduction protein PII (GlnB) which indicates the nitrogen status of the cell. The chain is Bifunctional glutamine synthetase adenylyltransferase/adenylyl-removing enzyme from Bartonella quintana (strain Toulouse) (Rochalimaea quintana).